Here is a 21-residue protein sequence, read N- to C-terminus: Peptide PGLa-R4 (21 aa).

Position 21 is a leucine amide (leucine 21).

Expressed by the skin glands.

It localises to the secreted. Its function is as follows. Antimicrobial peptide. This Xenopus ruwenzoriensis (Uganda clawed frog) protein is Peptide PGLa-R4.